A 362-amino-acid chain; its full sequence is tRNA N6-adenosine threonylcarbamoyltransferase (362 aa).

Residues histidine 116 and histidine 120 each coordinate Fe cation. Residues leucine 138–glycine 142, aspartate 171, glycine 184, and asparagine 284 each bind substrate. Fe cation is bound at residue aspartate 312.

The protein belongs to the KAE1 / TsaD family. The cofactor is Fe(2+).

It is found in the cytoplasm. It carries out the reaction L-threonylcarbamoyladenylate + adenosine(37) in tRNA = N(6)-L-threonylcarbamoyladenosine(37) in tRNA + AMP + H(+). Required for the formation of a threonylcarbamoyl group on adenosine at position 37 (t(6)A37) in tRNAs that read codons beginning with adenine. Is involved in the transfer of the threonylcarbamoyl moiety of threonylcarbamoyl-AMP (TC-AMP) to the N6 group of A37, together with TsaE and TsaB. TsaD likely plays a direct catalytic role in this reaction. The polypeptide is tRNA N6-adenosine threonylcarbamoyltransferase (Chelativorans sp. (strain BNC1)).